Reading from the N-terminus, the 330-residue chain is Pre-mRNA-splicing factor 38 (330 aa).

The interval 182 to 330 (SVLDEDLDDE…SRGERDRRRY (149 aa)) is disordered. Acidic residues predominate over residues 184-199 (LDEDLDDELPSDEEKA). The span at 213 to 224 (RRPRRVRSKSRS) shows a compositional bias: basic residues. Basic and acidic residues predominate over residues 240 to 330 (RSRDYYDELE…SRGERDRRRY (91 aa)).

The protein belongs to the PRP38 family. Component of the spliceosome C complex. Interacts with Mfap1 (via C-terminus). Detected in all germal and follicle cells.

The protein localises to the nucleus. Functionally, required for pre-mRNA splicing. The chain is Pre-mRNA-splicing factor 38 from Drosophila melanogaster (Fruit fly).